An 86-amino-acid polypeptide reads, in one-letter code: Neurotoxin 3FTx-LT (86 aa).

The signal sequence occupies residues 1–21; that stretch reads MKTLLLTLVVVTIVCLDLGYT. Disulfide bonds link C24-C45, C27-C32, C38-C63, C67-C78, and C79-C84.

As to expression, expressed by the venom gland.

Its subcellular location is the secreted. Its function is as follows. Binds with low affinity to muscular (alpha-1-beta-1-delta-epsilon/CHRNA1-CHRNB1-CHRND-CHRNE) and very low affinity to neuronal (alpha-7/CHRNA7) nicotinic acetylcholine receptor (nAChR). This is Neurotoxin 3FTx-LT from Bungarus fasciatus (Banded krait).